The sequence spans 585 residues: Arginine--tRNA ligase (585 aa).

A 'HIGH' region motif is present at residues 126-136 (PNIAKEMHVGH).

Belongs to the class-I aminoacyl-tRNA synthetase family. In terms of assembly, monomer.

The protein localises to the cytoplasm. The enzyme catalyses tRNA(Arg) + L-arginine + ATP = L-arginyl-tRNA(Arg) + AMP + diphosphate. The chain is Arginine--tRNA ligase from Crocosphaera subtropica (strain ATCC 51142 / BH68) (Cyanothece sp. (strain ATCC 51142)).